The chain runs to 210 residues: Silenced mating-type protein ALPHA2 (210 aa).

Met-1 carries the post-translational modification N-acetylmethionine. An N-terminal domain region spans residues 1–102; the sequence is MNKIPIKDLL…RSIENDRSNY (102 aa). The tract at residues 103-128 is flexible linker; that stretch reads QLTQKNKSADGLVFNVVTQDMINKST. A DNA-binding region (homeobox; TALE-type) is located at residues 129-191; the sequence is KPYRGHRFTK…NRRRKEKTIT (63 aa). The interval 190–210 is C-terminal tail; that stretch reads ITIAPELADLLSGEPLAKKKE.

The protein belongs to the TALE/M-ATYP homeobox family.

The protein resides in the nucleus. Functionally, mating type proteins are sequence specific DNA-binding proteins that act as master switches in yeast differentiation by controlling gene expression in a cell type-specific fashion. Silenced copy of ALPHA2 at HML. In Saccharomyces cerevisiae (strain ATCC 204508 / S288c) (Baker's yeast), this protein is Silenced mating-type protein ALPHA2 (HMLALPHA2).